We begin with the raw amino-acid sequence, 385 residues long: Acetate kinase (385 aa).

Asn-9 provides a ligand contact to Mg(2+). An ATP-binding site is contributed by Lys-16. Arg-87 is a binding site for substrate. Catalysis depends on Asp-144, which acts as the Proton donor/acceptor. ATP-binding positions include 202–206 and 277–279; these read HLGSG and DIR. Glu-373 is a Mg(2+) binding site.

It belongs to the acetokinase family. As to quaternary structure, homodimer. It depends on Mg(2+) as a cofactor. Mn(2+) serves as cofactor.

It is found in the cytoplasm. It catalyses the reaction acetate + ATP = acetyl phosphate + ADP. It functions in the pathway metabolic intermediate biosynthesis; acetyl-CoA biosynthesis; acetyl-CoA from acetate: step 1/2. Functionally, catalyzes the formation of acetyl phosphate from acetate and ATP. Can also catalyze the reverse reaction. The chain is Acetate kinase from Rickettsia akari (strain Hartford).